An 864-amino-acid chain; its full sequence is MSKSAVSPMMQQYLGIKAQHTDKLVFYRMGDFYELFLDDAVEAAKLLDITLTTRGQMDGVPIKMAGVPFHAAEQYLARLVKLGKSVAICEQVGEVGAGKGPVERKVVRIVTPGTLTDSALLEDKETNRIVAVSPDKKYIGLAWASLQSGEFKTKLTTADKLNDELARLQAAEILLPDSKNAPQLQTASGVTRLNAWQFAADAGEKLLTEYFGCQDLRGFGLDSKEHAVSIGAAGALLNYIRLTQNLMPQHLDGLSLETDSQYIGMDAATRRNLEITQTLSGKKTPTLFSILDGCATHMGSRLLALWLHHPLRNRAHIRARQEAVTALESQYEPLQCHLKSIADIERIAARIAVGNARPRDLASLRDSLFELAQIDLSATGSSLLETLKAVFPETLPVAETLKAAVMPEPSVWLKDGNVINHGFHPELDELRRIQNHGDEFLLDLEAKERERTGLSTLKVEFNRVHGFYIELSKTQAEQAPADYQRRQTLKNAERFITPELKAFEDKVLTAQDQALALEKQLFDGVLKNLRTALPQLQKAAKAAAALDVLSTFSALAKERNFVRPEFADYPVVHIENGRHPVVEQQVRHFTANHTDLDHKHRLMLLTGPNMGGKSTYMRQVALIVLLAHTGCFVPADAATIGPVDQIFTRIGASDDLASNRSTFMVEMSETAYILHHATEQIIVLMDEVGRGTSTFDGLALAHAIAEHLLQKNKSFSLFATHYFELTYLPEAHAAAVNMHLSALEQGRDIVFLHQIQPGPAGKSYGIAVAKLAGLPVRALKAAQKHLNGLENQAAANRPQLDIFSTMPSEKGDEPNVDCFVDKAEEKHFEGILAAALENLDPDSLTPREALSELYRLKDLCKSVS.

607–614 (GPNMGGKS) lines the ATP pocket.

Belongs to the DNA mismatch repair MutS family.

Functionally, this protein is involved in the repair of mismatches in DNA. It is possible that it carries out the mismatch recognition step. This protein has a weak ATPase activity. The sequence is that of DNA mismatch repair protein MutS from Neisseria gonorrhoeae (strain NCCP11945).